Consider the following 395-residue polypeptide: Phosphoglycerate kinase (395 aa).

Residues 21 to 23 (DLN), Arg36, 59 to 62 (HLGR), Arg113, and Arg146 each bind substrate. ATP-binding positions include Lys197, Glu324, and 350-353 (GGDT).

This sequence belongs to the phosphoglycerate kinase family. In terms of assembly, monomer.

Its subcellular location is the cytoplasm. It catalyses the reaction (2R)-3-phosphoglycerate + ATP = (2R)-3-phospho-glyceroyl phosphate + ADP. It functions in the pathway carbohydrate degradation; glycolysis; pyruvate from D-glyceraldehyde 3-phosphate: step 2/5. This Acinetobacter baumannii (strain ATCC 17978 / DSM 105126 / CIP 53.77 / LMG 1025 / NCDC KC755 / 5377) protein is Phosphoglycerate kinase.